A 200-amino-acid polypeptide reads, in one-letter code: Glycerol-3-phosphate acyltransferase (200 aa).

Transmembrane regions (helical) follow at residues 2 to 22 (FNIP…AVIV), 51 to 71 (KAAV…VLLA), 84 to 104 (AIAA…FFGF), 114 to 134 (LGVL…IWLV), and 159 to 179 (FFMP…LVLF).

Belongs to the PlsY family. Probably interacts with PlsX.

Its subcellular location is the cell inner membrane. The enzyme catalyses an acyl phosphate + sn-glycerol 3-phosphate = a 1-acyl-sn-glycero-3-phosphate + phosphate. Its pathway is lipid metabolism; phospholipid metabolism. Its function is as follows. Catalyzes the transfer of an acyl group from acyl-phosphate (acyl-PO(4)) to glycerol-3-phosphate (G3P) to form lysophosphatidic acid (LPA). This enzyme utilizes acyl-phosphate as fatty acyl donor, but not acyl-CoA or acyl-ACP. This chain is Glycerol-3-phosphate acyltransferase, found in Neisseria meningitidis serogroup C / serotype 2a (strain ATCC 700532 / DSM 15464 / FAM18).